Reading from the N-terminus, the 310-residue chain is tRNA-cytidine(32) 2-sulfurtransferase (310 aa).

The PP-loop motif signature appears at 45 to 50 (SGGKDS). Residues cysteine 120, cysteine 123, and cysteine 211 each coordinate [4Fe-4S] cluster.

This sequence belongs to the TtcA family. In terms of assembly, homodimer. Requires Mg(2+) as cofactor. [4Fe-4S] cluster is required as a cofactor.

Its subcellular location is the cytoplasm. It carries out the reaction cytidine(32) in tRNA + S-sulfanyl-L-cysteinyl-[cysteine desulfurase] + AH2 + ATP = 2-thiocytidine(32) in tRNA + L-cysteinyl-[cysteine desulfurase] + A + AMP + diphosphate + H(+). Its pathway is tRNA modification. Catalyzes the ATP-dependent 2-thiolation of cytidine in position 32 of tRNA, to form 2-thiocytidine (s(2)C32). The sulfur atoms are provided by the cysteine/cysteine desulfurase (IscS) system. This is tRNA-cytidine(32) 2-sulfurtransferase from Shewanella baltica (strain OS185).